The primary structure comprises 61 residues: DNA-directed RNA polymerase subunit 12-like protein (61 aa).

Residues Cys-21, Cys-24, Cys-38, and Cys-41 each coordinate Zn(2+).

Belongs to the archaeal Rpo12/eukaryotic RPC10 RNA polymerase subunit family.

The protein localises to the nucleus. The polypeptide is DNA-directed RNA polymerase subunit 12-like protein (NRPB12L) (Arabidopsis thaliana (Mouse-ear cress)).